The primary structure comprises 398 residues: MWWLLATTCCVLLSGPIDGYKQESITNPEANMNISELISYWGYPYEKHDVITEDGYILGTYRIPHGKGCSRKTAPKAVVYLQHGLIASANNWICNLPNNSLAFLLADSGYDVWLGNSRGNTWSRNHLRLSPKSPQYWAFSWDEMAKYDLPATVNLILEKSGQKQLFYVGHSQGTTIAFIAFSTNPELAKKIRLFFALAPVATVKYTRSPMKKLTTLSRKAVKVLFGDKMFSTHTWFEQFIATKVCNRKLFHQLCSNFLFSLSGFDPQNLNMSRLDVYLSQSPAGTSVQNMLHWAQAVNSGQLQAFDWGNPDQNMMHFNQLTPPVYNISKMRVPTAMWSGGQDVVADAKDTKNLLPKIANLIYYKEIPHYNHMDFYLGQDAPQEVYGDLIRMIEESLQN.

Residues 1–19 (MWWLLATTCCVLLSGPIDG) form the signal peptide. Residues 78–377 (VVYLQHGLIA…HYNHMDFYLG (300 aa)) enclose the AB hydrolase-1 domain. S171 serves as the catalytic Nucleophile. Residues C245 and C254 are joined by a disulfide bond. N-linked (GlcNAc...) asparagine glycosylation is found at N270 and N326. Active-site charge relay system residues include D342 and H371.

It belongs to the AB hydrolase superfamily. Lipase family.

The protein localises to the secreted. In terms of biological role, plays a highly specific role in the last step of keratinocyte differentiation. May have an essential function in lipid metabolism of the most differentiated epidermal layers. This Mus musculus (Mouse) protein is Lipase member K (Lipk).